A 489-amino-acid polypeptide reads, in one-letter code: IPT/TIG domain-containing protein BACOVA_02650 (489 aa).

The first 27 residues, 1-27 (MKSIYKYLDTRLFLIGLLVLPFLAVVS), serve as a signal peptide directing secretion. Cys28 carries the N-palmitoyl cysteine lipid modification. The S-diacylglycerol cysteine moiety is linked to residue Cys28. 3 consecutive IPT/TIG domains span residues 57–103 (VNPG…PNEL), 136–204 (PYIT…TAPA), and 232–304 (PVVT…AIGG).

It localises to the cell outer membrane. The protein operates within glucan metabolism; xyloglucan degradation. Its function is as follows. Polysaccharide-binding protein present at the surface of the cell. Probably mediates xyloglucan-binding before xyloglucan transport in the periplasm for degradation. The protein is IPT/TIG domain-containing protein BACOVA_02650 of Bacteroides ovatus (strain ATCC 8483 / DSM 1896 / JCM 5824 / BCRC 10623 / CCUG 4943 / NCTC 11153).